A 412-amino-acid chain; its full sequence is Docking protein 2 (412 aa).

The PH domain occupies 4–114; sequence GAVKQGFLYL…WVQAICLLAF (111 aa). One can recognise an IRS-type PTB domain in the interval 147 to 252; it reads PHKEFAVTMR…SAQKNAAPAT (106 aa). The segment at 246–296 is disordered; sequence KNAAPATPQPQPATIPASLPRPDSPYSRPHDSLPPPSPTTPVPAPRPRGQE. Tyr271 bears the Phosphotyrosine mark. Positions 277–291 are enriched in pro residues; it reads SLPPPSPTTPVPAPR. 2 positions are modified to phosphotyrosine: Tyr299 and Tyr345. A disordered region spans residues 359–412; the sequence is SPQEPRGEAWRRQATADRDPAGLQHVQPAGQDFSASGWQPGTEYDNVVLKKGPK. A compositionally biased stretch (basic and acidic residues) spans 361 to 378; it reads QEPRGEAWRRQATADRDP.

This sequence belongs to the DOK family. Type A subfamily. Interacts with phosphorylated RASGAP and EGFR. Interacts with RET and NCK. Interacts (via PH domain) with TEK/TIE2 (tyrosine phosphorylated). In terms of assembly, (Microbial infection) Interacts with Herpes simplex virus 1 (HHV-1) protein UL46; this interaction induces DOK2 phosphorylation and subsequent degradation. On immunoreceptor stimulation, phosphorylated on C-terminal tyrosine residues. Phosphorylation on Tyr-345 is required for binding to the SH2 domain of NCK. Phosphorylation on both Tyr-271 and Tyr-299 is required for interaction with RASGAP. Phosphorylated on tyrosine residues by TEK/TIE2. As to expression, highly expressed in peripheral blood leukocytes, lymph nodes and spleen. Lower expression in thymus, bone marrow and fetal liver.

Functionally, DOK proteins are enzymatically inert adaptor or scaffolding proteins. They provide a docking platform for the assembly of multimolecular signaling complexes. DOK2 may modulate the cellular proliferation induced by IL-4, as well as IL-2 and IL-3. May be involved in modulating Bcr-Abl signaling. Attenuates EGF-stimulated MAP kinase activation. The sequence is that of Docking protein 2 (DOK2) from Homo sapiens (Human).